The primary structure comprises 129 residues: Transcription factor bHLH138 (129 aa).

Positions 1 to 18 are enriched in basic and acidic residues; it reads MERYTKKNERFKAEEGKG. Positions 1–24 are disordered; that stretch reads MERYTKKNERFKAEEGKGSKKSRT. The region spanning 19-68 is the bHLH domain; the sequence is SKKSRTFLTERERRALFNDRFFDLKNLIPNPTKGGEASIVQDGIVYINEL.

It belongs to the bHLH protein family.

It is found in the nucleus. In Arabidopsis thaliana (Mouse-ear cress), this protein is Transcription factor bHLH138.